A 99-amino-acid chain; its full sequence is Class II hydrophobin 2 (99 aa).

The signal sequence occupies residues 1 to 15 (MKFFVVAALFAGALA). Intrachain disulfides connect Cys-30/Cys-79 and Cys-40/Cys-70.

The protein belongs to the cerato-ulmin hydrophobin family. Homotetramer. Further self-assembles to form highly ordered films at water-air interfaces through intermolecular interactions.

Its subcellular location is the secreted. It is found in the cell wall. Aerial growth, conidiation, and dispersal of filamentous fungi in the environment rely upon a capability of their secreting small amphipathic proteins called hydrophobins (HPBs) with low sequence identity. Class I can self-assemble into an outermost layer of rodlet bundles on aerial cell surfaces, conferring cellular hydrophobicity that supports fungal growth, development and dispersal; whereas Class II form highly ordered films at water-air interfaces through intermolecular interactions but contribute nothing to the rodlet structure. HYD2 is a class II hydrophobin that contributes to the fruiting body development. The chain is Class II hydrophobin 2 from Cordyceps militaris (Caterpillar fungus).